Reading from the N-terminus, the 395-residue chain is MGIKHLFQVIQENAPDAIKAGDIKNHFGRKVAIDASMSIYSFLIAVRSEGQQLMSESGETTSHLMGMFYRTLRMVDNGIKPLYVFDGAPPKLKSGELAKRTARKAEATEAHEEAKETGTAEDVEKFSRRTVRVTREHNAECKKLLKLMGIPYIDAPTEAEAQCAVLARAGKVYAAASEDMDTLCFEAPILLRHLTFSEQRKEPIQEIHLNRALEGLGMDRKQFIDLCILLGCDYLEPIPKVGPNTALKLIREHGSLEKVVEAIENDPKKKYVIPEYWPYQDARELFLHPDVREADHPECDFKWEAPDVEALVEFLVKDKGFNEDRVRNGAARLQKNLKTAQQSRLEGFFKPVARTDEEKASLKRKHDEKLQEQKKRKKEEAKAKKEAKAKPRGAA.

The tract at residues 1 to 104 is N-domain; the sequence is MGIKHLFQVI…GELAKRTARK (104 aa). D34 is a Mg(2+) binding site. R47 and R70 together coordinate DNA. D86 lines the Mg(2+) pocket. Residues 102-121 form a disordered region; sequence ARKAEATEAHEEAKETGTAE. The I-domain stretch occupies residues 122 to 253; that stretch reads DVEKFSRRTV…NTALKLIREH (132 aa). Positions 158, 160, 179, and 181 each coordinate Mg(2+). E158 contributes to the DNA binding site. DNA is bound by residues G231 and D233. Residue D233 coordinates Mg(2+). The interaction with PCNA stretch occupies residues 341–349; sequence QQSRLEGFF. The disordered stretch occupies residues 348-395; sequence FFKPVARTDEEKASLKRKHDEKLQEQKKRKKEEAKAKKEAKAKPRGAA. Over residues 353–389 the composition is skewed to basic and acidic residues; it reads ARTDEEKASLKRKHDEKLQEQKKRKKEEAKAKKEAKA.

It belongs to the XPG/RAD2 endonuclease family. FEN1 subfamily. Interacts with PCNA. Three molecules of fen1 bind to one PCNA trimer with each molecule binding to one PCNA monomer. PCNA stimulates the nuclease activity without altering cleavage specificity. Requires Mg(2+) as cofactor. Post-translationally, phosphorylated. Phosphorylation upon DNA damage induces relocalization to the nuclear plasma.

Its subcellular location is the nucleus. The protein resides in the nucleolus. The protein localises to the nucleoplasm. It localises to the mitochondrion. In terms of biological role, structure-specific nuclease with 5'-flap endonuclease and 5'-3' exonuclease activities involved in DNA replication and repair. During DNA replication, cleaves the 5'-overhanging flap structure that is generated by displacement synthesis when DNA polymerase encounters the 5'-end of a downstream Okazaki fragment. It enters the flap from the 5'-end and then tracks to cleave the flap base, leaving a nick for ligation. Also involved in the long patch base excision repair (LP-BER) pathway, by cleaving within the apurinic/apyrimidinic (AP) site-terminated flap. Acts as a genome stabilization factor that prevents flaps from equilibrating into structures that lead to duplications and deletions. Also possesses 5'-3' exonuclease activity on nicked or gapped double-stranded DNA, and exhibits RNase H activity. Also involved in replication and repair of rDNA and in repairing mitochondrial DNA. The sequence is that of Flap endonuclease 1 (fen1) from Aspergillus fumigatus (strain CBS 144.89 / FGSC A1163 / CEA10) (Neosartorya fumigata).